The chain runs to 490 residues: GTPase Der (490 aa).

EngA-type G domains are found at residues 3–166 and 203–376; these read PVVA…MDDV and IKLA…DSST. Residues 9–16, 56–60, 118–121, 209–216, 256–260, and 321–324 contribute to the GTP site; these read GRPNVGKS, DTGGI, NKTD, DTAGV, and NKWD. Residues 377 to 461 enclose the KH-like domain; sequence RRVSTAMLTR…PIRIQFKEGE (85 aa).

The protein belongs to the TRAFAC class TrmE-Era-EngA-EngB-Septin-like GTPase superfamily. EngA (Der) GTPase family. In terms of assembly, associates with the 50S ribosomal subunit.

Its function is as follows. GTPase that plays an essential role in the late steps of ribosome biogenesis. This is GTPase Der from Salmonella gallinarum (strain 287/91 / NCTC 13346).